Reading from the N-terminus, the 179-residue chain is MARLQAIYRDKLVPELIRQFGYSSPMQVPRLSKITLNMGVSEAVSDKKVMDSAVADLTRIAGQKPVVTKAKKAIAGFKIREGQAIGCMVTLRGVQMYEFLDRFVTVALPRVRDFRGISGRSFDGRGNYNVGVKEQIIFPEIEYDKVDALRGLNVSITTTARTDEEAKALLAGFRFPFKN.

This sequence belongs to the universal ribosomal protein uL5 family. In terms of assembly, part of the 50S ribosomal subunit; part of the 5S rRNA/L5/L18/L25 subcomplex. Contacts the 5S rRNA and the P site tRNA. Forms a bridge to the 30S subunit in the 70S ribosome.

This is one of the proteins that bind and probably mediate the attachment of the 5S RNA into the large ribosomal subunit, where it forms part of the central protuberance. In the 70S ribosome it contacts protein S13 of the 30S subunit (bridge B1b), connecting the 2 subunits; this bridge is implicated in subunit movement. Contacts the P site tRNA; the 5S rRNA and some of its associated proteins might help stabilize positioning of ribosome-bound tRNAs. This is Large ribosomal subunit protein uL5 from Verminephrobacter eiseniae (strain EF01-2).